The primary structure comprises 482 residues: Ribulose bisphosphate carboxylase large chain (482 aa).

A propeptide spanning residues 1-2 (MS) is cleaved from the precursor. Proline 3 carries the N-acetylproline modification. N6,N6,N6-trimethyllysine is present on lysine 14. Substrate is bound by residues asparagine 123 and threonine 173. Lysine 175 functions as the Proton acceptor in the catalytic mechanism. A substrate-binding site is contributed by lysine 177. The Mg(2+) site is built by lysine 201, aspartate 203, and glutamate 204. An N6-carboxylysine modification is found at lysine 201. Histidine 294 (proton acceptor) is an active-site residue. Positions 295, 327, and 379 each coordinate substrate.

It belongs to the RuBisCO large chain family. Type I subfamily. Heterohexadecamer of 8 large chains and 8 small chains; disulfide-linked. The disulfide link is formed within the large subunit homodimers. The cofactor is Mg(2+). In terms of processing, the disulfide bond which can form in the large chain dimeric partners within the hexadecamer appears to be associated with oxidative stress and protein turnover.

It localises to the plastid. The protein localises to the chloroplast. It carries out the reaction 2 (2R)-3-phosphoglycerate + 2 H(+) = D-ribulose 1,5-bisphosphate + CO2 + H2O. It catalyses the reaction D-ribulose 1,5-bisphosphate + O2 = 2-phosphoglycolate + (2R)-3-phosphoglycerate + 2 H(+). Its function is as follows. RuBisCO catalyzes two reactions: the carboxylation of D-ribulose 1,5-bisphosphate, the primary event in carbon dioxide fixation, as well as the oxidative fragmentation of the pentose substrate in the photorespiration process. Both reactions occur simultaneously and in competition at the same active site. The sequence is that of Ribulose bisphosphate carboxylase large chain from Phytolacca americana (American pokeweed).